We begin with the raw amino-acid sequence, 234 residues long: uncharacterized protein (234 aa).

The next 4 helical transmembrane spans lie at 22 to 42 (TFLN…IPLI), 59 to 79 (INWA…AYLI), 154 to 174 (FWIF…IFFC), and 186 to 206 (LLSL…IFAL).

The protein localises to the cell membrane. This is an uncharacterized protein from Escherichia coli (strain K12).